The chain runs to 385 residues: S-adenosylmethionine synthase (385 aa).

H14 is a binding site for ATP. Residue D16 participates in Mg(2+) binding. E42 provides a ligand contact to K(+). E55 and Q98 together coordinate L-methionine. A flexible loop region spans residues Q98 to N108. Residues D165 to K167, R232 to F233, D241, R247 to K248, A264, and K268 contribute to the ATP site. D241 is an L-methionine binding site. K272 provides a ligand contact to L-methionine.

This sequence belongs to the AdoMet synthase family. As to quaternary structure, homotetramer; dimer of dimers. The cofactor is Mg(2+). Requires K(+) as cofactor.

It localises to the cytoplasm. The catalysed reaction is L-methionine + ATP + H2O = S-adenosyl-L-methionine + phosphate + diphosphate. Its pathway is amino-acid biosynthesis; S-adenosyl-L-methionine biosynthesis; S-adenosyl-L-methionine from L-methionine: step 1/1. In terms of biological role, catalyzes the formation of S-adenosylmethionine (AdoMet) from methionine and ATP. The overall synthetic reaction is composed of two sequential steps, AdoMet formation and the subsequent tripolyphosphate hydrolysis which occurs prior to release of AdoMet from the enzyme. In Leuconostoc mesenteroides subsp. mesenteroides (strain ATCC 8293 / DSM 20343 / BCRC 11652 / CCM 1803 / JCM 6124 / NCDO 523 / NBRC 100496 / NCIMB 8023 / NCTC 12954 / NRRL B-1118 / 37Y), this protein is S-adenosylmethionine synthase.